A 118-amino-acid chain; its full sequence is Thioredoxin H-type (118 aa).

The Thioredoxin domain maps to 2 to 114 (AAEEGQVIGC…LQQTIAKHMA (113 aa)). Active-site nucleophile residues include Cys-40 and Cys-43. A disulfide bridge links Cys-40 with Cys-43.

This sequence belongs to the thioredoxin family. Plant H-type subfamily.

The protein localises to the cytoplasm. In terms of biological role, participates in various redox reactions through the reversible oxidation of the active center dithiol to a disulfide. The H form is known to activate a number of cytosolic enzymes. This is Thioredoxin H-type from Ricinus communis (Castor bean).